Consider the following 505-residue polypeptide: Maturase K (505 aa).

This sequence belongs to the intron maturase 2 family. MatK subfamily.

It is found in the plastid. The protein resides in the chloroplast. In terms of biological role, usually encoded in the trnK tRNA gene intron. Probably assists in splicing its own and other chloroplast group II introns. This Silene otites (Spanish catchfly) protein is Maturase K.